The primary structure comprises 135 residues: ATP synthase epsilon chain (135 aa).

The protein belongs to the ATPase epsilon chain family. As to quaternary structure, F-type ATPases have 2 components, CF(1) - the catalytic core - and CF(0) - the membrane proton channel. CF(1) has five subunits: alpha(3), beta(3), gamma(1), delta(1), epsilon(1). CF(0) has three main subunits: a, b and c.

The protein resides in the cell inner membrane. Functionally, produces ATP from ADP in the presence of a proton gradient across the membrane. This chain is ATP synthase epsilon chain, found in Allorhizobium ampelinum (strain ATCC BAA-846 / DSM 112012 / S4) (Agrobacterium vitis (strain S4)).